The sequence spans 162 residues: Caveolin-2 (162 aa).

Over 1–86 the chain is Cytoplasmic; sequence MGLETEKADV…FEVSKYVIYK (86 aa). Tyr-19 carries the post-translational modification Phosphotyrosine; by SRC. Phosphoserine is present on residues Ser-20, Ser-23, and Ser-36. An intramembrane region (helical) is located at residues 87-107; that stretch reads FLTLLLAMPMAFAAGVLFATL. Topologically, residues 108–162 are cytoplasmic; it reads SCLHIWIIMPFVKTCLMVLPSVQTIWKSVTDAVIAPLCSSVGRSFSSVSLQVSHD.

Belongs to the caveolin family. Monomer or homodimer. Interacts with CAV1; the interaction forms a stable heterooligomeric complex that is required for targeting to lipid rafts and for caveolae formation. Tyrosine phosphorylated forms do not form heterooligomers with the Tyr-19-phosphorylated form existing as a monomer or dimer. Interacts (tyrosine phosphorylated form) with the SH2 domain-containing proteins, RASA1, NCK1 and SRC. Interacts (tyrosine phosphorylated form) with INSR. Interacts (Tyr-19 phosphorylated form) with MAPK1 (phosphorylated form); the interaction, promoted by insulin, leads to nuclear location and MAPK1 activation. Interacts with STAT3; the interaction is increased on insulin-induced tyrosine phosphorylation leading to STAT activation. Post-translationally, phosphorylated on serine and tyrosine residues. CAV1 promotes phosphorylation on Ser-23 which then targets the complex to the plasma membrane, lipid rafts and caveolae. Phosphorylation on Ser-36 appears to modulate mitosis in endothelial cells. Phosphorylation on Tyr-19 is required for insulin-induced phosphorylation of MAPK1 and DNA binding of STAT3. Tyrosine phosphorylation is induced by both EGF and insulin.

The protein localises to the nucleus. It localises to the cytoplasm. The protein resides in the golgi apparatus membrane. Its subcellular location is the cell membrane. It is found in the membrane. The protein localises to the caveola. In terms of biological role, may act as a scaffolding protein within caveolar membranes. Interacts directly with G-protein alpha subunits and can functionally regulate their activity. Acts as an accessory protein in conjunction with CAV1 in targeting to lipid rafts and driving caveolae formation. The Ser-36 phosphorylated form has a role in modulating mitosis in endothelial cells. Positive regulator of cellular mitogenesis of the MAPK signaling pathway. Required for the insulin-stimulated nuclear translocation and activation of MAPK1 and STAT3, and the subsequent regulation of cell cycle progression. The polypeptide is Caveolin-2 (CAV2) (Canis lupus familiaris (Dog)).